The chain runs to 351 residues: Thiamine-phosphate synthase (351 aa).

The interval 1 to 128 (MLNSNTKDHE…SKIASEIRYE (128 aa)) is unknown. Residues 129-351 (IYTVEIDLLS…MILKELSHEN (223 aa)) form a thiamine-phosphate synthase region. 4-amino-2-methyl-5-(diphosphooxymethyl)pyrimidine-binding positions include 180–184 (QHRFK) and asparagine 212. The Mg(2+) site is built by aspartate 213 and aspartate 232. Serine 251 provides a ligand contact to 4-amino-2-methyl-5-(diphosphooxymethyl)pyrimidine. 2-[(2R,5Z)-2-carboxy-4-methylthiazol-5(2H)-ylidene]ethyl phosphate is bound at residue 277–279 (TTT). A 4-amino-2-methyl-5-(diphosphooxymethyl)pyrimidine-binding site is contributed by lysine 280. Residue glycine 307 participates in 2-[(2R,5Z)-2-carboxy-4-methylthiazol-5(2H)-ylidene]ethyl phosphate binding.

It belongs to the thiamine-phosphate synthase family. Mg(2+) is required as a cofactor.

The enzyme catalyses 2-[(2R,5Z)-2-carboxy-4-methylthiazol-5(2H)-ylidene]ethyl phosphate + 4-amino-2-methyl-5-(diphosphooxymethyl)pyrimidine + 2 H(+) = thiamine phosphate + CO2 + diphosphate. It carries out the reaction 2-(2-carboxy-4-methylthiazol-5-yl)ethyl phosphate + 4-amino-2-methyl-5-(diphosphooxymethyl)pyrimidine + 2 H(+) = thiamine phosphate + CO2 + diphosphate. The catalysed reaction is 4-methyl-5-(2-phosphooxyethyl)-thiazole + 4-amino-2-methyl-5-(diphosphooxymethyl)pyrimidine + H(+) = thiamine phosphate + diphosphate. It participates in cofactor biosynthesis; thiamine diphosphate biosynthesis; thiamine phosphate from 4-amino-2-methyl-5-diphosphomethylpyrimidine and 4-methyl-5-(2-phosphoethyl)-thiazole: step 1/1. Condenses 4-methyl-5-(beta-hydroxyethyl)thiazole monophosphate (THZ-P) and 2-methyl-4-amino-5-hydroxymethyl pyrimidine pyrophosphate (HMP-PP) to form thiamine monophosphate (TMP). In Prochlorococcus marinus (strain AS9601), this protein is Thiamine-phosphate synthase.